A 645-amino-acid chain; its full sequence is Acetyl-coenzyme A synthetase (645 aa).

CoA is bound by residues 190-193 (RGGK) and Thr-308. ATP contacts are provided by residues 384 to 386 (GEP), 408 to 413 (DTWWQT), Asp-497, and Arg-512. Ser-520 contacts CoA. Arg-523 provides a ligand contact to ATP. Mg(2+)-binding residues include Val-534, His-536, and Ile-539. At Lys-606 the chain carries N6-acetyllysine.

Belongs to the ATP-dependent AMP-binding enzyme family. Mg(2+) is required as a cofactor. In terms of processing, acetylated. Deacetylation by the SIR2-homolog deacetylase activates the enzyme.

It carries out the reaction acetate + ATP + CoA = acetyl-CoA + AMP + diphosphate. In terms of biological role, catalyzes the conversion of acetate into acetyl-CoA (AcCoA), an essential intermediate at the junction of anabolic and catabolic pathways. AcsA undergoes a two-step reaction. In the first half reaction, AcsA combines acetate with ATP to form acetyl-adenylate (AcAMP) intermediate. In the second half reaction, it can then transfer the acetyl group from AcAMP to the sulfhydryl group of CoA, forming the product AcCoA. The polypeptide is Acetyl-coenzyme A synthetase (Alcanivorax borkumensis (strain ATCC 700651 / DSM 11573 / NCIMB 13689 / SK2)).